A 1064-amino-acid polypeptide reads, in one-letter code: Carbamoyl phosphate synthase large chain (1064 aa).

Residues 1–401 (MPKRADIKKI…ALMKAIRSLE (401 aa)) form a carboxyphosphate synthetic domain region. Residues Arg-129, Arg-169, Gly-175, Gly-176, Lys-208, Ile-210, Glu-215, Gly-241, Ile-242, His-243, Gln-284, and Glu-298 each contribute to the ATP site. Positions 133 to 327 (KQLMEALKEP…IAKMAAKIAI (195 aa)) constitute an ATP-grasp 1 domain. 3 residues coordinate Mg(2+): Gln-284, Glu-298, and Asn-300. Positions 284, 298, and 300 each coordinate Mn(2+). The oligomerization domain stretch occupies residues 402–546 (IGTFALDDLT…YSTYELENES (145 aa)). A carbamoyl phosphate synthetic domain region spans residues 547-929 (LKEKRPSVLV…ALYKAFVAAG (383 aa)). An ATP-grasp 2 domain is found at 671–861 (NQVIKKLDLS…LAQLATRVML (191 aa)). 10 residues coordinate ATP: Arg-707, Ser-746, Leu-748, Glu-752, Gly-777, Val-778, His-779, Ser-780, Gln-820, and Glu-832. Mg(2+) contacts are provided by Gln-820, Glu-832, and Asn-834. 3 residues coordinate Mn(2+): Gln-820, Glu-832, and Asn-834. Residues 930-1064 (FKVHEHGNVL…VSAINKGDKS (135 aa)) form the MGS-like domain. Positions 930 to 1064 (FKVHEHGNVL…VSAINKGDKS (135 aa)) are allosteric domain.

This sequence belongs to the CarB family. In terms of assembly, composed of two chains; the small (or glutamine) chain promotes the hydrolysis of glutamine to ammonia, which is used by the large (or ammonia) chain to synthesize carbamoyl phosphate. Tetramer of heterodimers (alpha,beta)4. Mg(2+) serves as cofactor. It depends on Mn(2+) as a cofactor.

It carries out the reaction hydrogencarbonate + L-glutamine + 2 ATP + H2O = carbamoyl phosphate + L-glutamate + 2 ADP + phosphate + 2 H(+). It catalyses the reaction hydrogencarbonate + NH4(+) + 2 ATP = carbamoyl phosphate + 2 ADP + phosphate + 2 H(+). Its pathway is amino-acid biosynthesis; L-arginine biosynthesis; carbamoyl phosphate from bicarbonate: step 1/1. It functions in the pathway pyrimidine metabolism; UMP biosynthesis via de novo pathway; (S)-dihydroorotate from bicarbonate: step 1/3. Large subunit of the glutamine-dependent carbamoyl phosphate synthetase (CPSase). CPSase catalyzes the formation of carbamoyl phosphate from the ammonia moiety of glutamine, carbonate, and phosphate donated by ATP, constituting the first step of 2 biosynthetic pathways, one leading to arginine and/or urea and the other to pyrimidine nucleotides. The large subunit (synthetase) binds the substrates ammonia (free or transferred from glutamine from the small subunit), hydrogencarbonate and ATP and carries out an ATP-coupled ligase reaction, activating hydrogencarbonate by forming carboxy phosphate which reacts with ammonia to form carbamoyl phosphate. This chain is Carbamoyl phosphate synthase large chain, found in Oenococcus oeni (strain ATCC BAA-331 / PSU-1).